The following is a 296-amino-acid chain: Circadian clock oscillator protein KaiA (296 aa).

The psR domain, binds oxidized quinones stretch occupies residues 2–133; sequence ARPGLTIALL…LRQGRADGRS (132 aa). The KaiA N-terminal domain maps to 2 to 152; it reads ARPGLTIALL…KLSRRLQERL (151 aa). The interval 153–161 is flexible linker; it reads GYLGVFYKR. The region spanning 162–270 is the KaiA C-terminal domain; the sequence is DPSRFLGSLP…CEMYRRSIPP (109 aa).

As to quaternary structure, homodimer. The KaiABC complex composition changes during the circadian cycle to control KaiC phosphorylation. Complexes KaiC(6), KaiA(2-4):KaiC(6), KaiB(6):KaiC(6) and KaiC(6):KaiB(6):KaiA(12) are among the most important forms, many form cooperatively. KaiA and CikA bind to the same region of the KaiB(fs) form and therefore compete.

Key component of the KaiABC oscillator complex, which constitutes the main circadian regulator in cyanobacteria. Complex composition changes during the circadian cycle to control KaiC phosphorylation. KaiA stimulates KaiC autophosphorylation, while KaiB sequesters KaiA, leading to KaiC autodephosphorylation. KaiA binding to the KaiC CII domain during the subjective day yields KaiA(2-4):KaiC(6) complexes which stimulate KaiC autophosphorylation. Phospho-Ser-431 KaiC accumulation triggers binding of KaiB during the subjective night to form the KaiB(6):KaiC(6) complex, leading to changes in the output regulators CikA and SasA. KaiB(6):KaiC(6) formation exposes a site for KaiA binding on KaiB that sequesters KaiA from KaiC's CII domain, making the KaiC(6):KaiB(6):KaiA(12) complex resulting in KaiC autodephosphorylation. Complete dephosphorylation of KaiC leads to dissociation of KaiA(2):KaiB(1), completing 1 cycle of the Kai oscillator. In terms of biological role, binds oxidized quinones via the N-terminal PsR domain, allowing it to sense redox changes and possibly mediate clock input. This Parasynechococcus marenigrum (strain WH8102) protein is Circadian clock oscillator protein KaiA.